Reading from the N-terminus, the 122-residue chain is Phospholipase A2 crotoxin basic subunit CBb (122 aa).

7 disulfides stabilise this stretch: cysteine 26/cysteine 115, cysteine 28/cysteine 44, cysteine 43/cysteine 95, cysteine 49/cysteine 122, cysteine 50/cysteine 88, cysteine 57/cysteine 81, and cysteine 75/cysteine 86. The Ca(2+) site is built by tyrosine 27, glycine 29, and glycine 31. The active site involves histidine 47. Aspartate 48 lines the Ca(2+) pocket. Residue aspartate 89 is part of the active site.

The protein belongs to the phospholipase A2 family. Group II subfamily. D49 sub-subfamily. Heterodimer of one of the acidic (CA1, CA2, CA3 or CA4) and one of the basic (CBa1, CBa2, CBb, CBc or CBd) subunits; non-covalently linked. The acidic subunit is non-toxic, without enzymatic activity and comprises 3 peptides that are cross-linked by 5 disulfide bridges. The basic subunit is toxic, has phospholipase A2 activity and is composed of a single chain. Multiple variants of each subunit give different crotoxin complexes that can be subdivided into 2 classes: (1) those of high toxicity, low PLA2 activity (CBb, CBc and CBd linked with high affinity to any CA) and high stability (K(d)=4.5 nM) and (2) those of moderate toxicity, high PLA2 activity (CBa2 linked with low affinity to any CA) and low stability (K(d)=25 nM). It depends on Ca(2+) as a cofactor. Expressed by the venom gland.

The protein resides in the secreted. It catalyses the reaction a 1,2-diacyl-sn-glycero-3-phosphocholine + H2O = a 1-acyl-sn-glycero-3-phosphocholine + a fatty acid + H(+). Functionally, heterodimer CA-CB: Crotoxin is a potent presynaptic neurotoxin that possesses phospholipase A2 (PLA2) activity and exerts a lethal action by blocking neuromuscular transmission. It consists of a non-covalent association of a basic and weakly toxic PLA2 subunit (CBa2, CBb, CBc, or CBd), with a small acidic, non-enzymatic and non-toxic subunit (CA1, CA2, CA3 or CA4). The complex acts by binding to a specific 48-kDa protein (R48) receptor located on presynaptic membranes, forming a transient ternary complex CA-CB-R48, followed by dissociation of the CA-CB complex and release of the CA subunit. At equilibrium, only the CB subunits remain associated with the specific crotoxin receptor. In addition to neurotoxicity, crotoxin has been found to exert myotoxicity, nephrotoxicity, and cardiovascular toxicity. Moreover, anti-inflammatory, immunomodulatory, anti-tumor and analgesic effects of crotoxin have also been reported. Monomer CBb: The basic subunit of crotoxin is a snake venom phospholipase A2 (PLA2) that exhibits weak neurotoxicity (10-fold less than the heterodimer) and strong anticoagulant effects by binding to factor Xa (F10) and inhibiting the prothrombinase activity. In addition, it shows the same effects described for the heterodimer and binds the nucleotide-binding domain (NBD1) of CFTR chloride channels and increases the channel current. PLA2 catalyzes the calcium-dependent hydrolysis of the 2-acyl groups in 3-sn-phosphoglycerides. The protein is Phospholipase A2 crotoxin basic subunit CBb of Crotalus durissus terrificus (South American rattlesnake).